Reading from the N-terminus, the 407-residue chain is tRNA(Ile2) 2-agmatinylcytidine synthetase TiaS (407 aa).

It belongs to the TiaS family.

It localises to the cytoplasm. The catalysed reaction is cytidine(34) in tRNA(Ile2) + agmatine + ATP + H2O = 2-agmatinylcytidine(34) in tRNA(Ile2) + AMP + 2 phosphate + 2 H(+). In terms of biological role, ATP-dependent agmatine transferase that catalyzes the formation of 2-agmatinylcytidine (agm2C) at the wobble position (C34) of tRNA(Ile2), converting the codon specificity from AUG to AUA. This chain is tRNA(Ile2) 2-agmatinylcytidine synthetase TiaS, found in Caldivirga maquilingensis (strain ATCC 700844 / DSM 13496 / JCM 10307 / IC-167).